Here is a 357-residue protein sequence, read N- to C-terminus: Ribosomal RNA large subunit methyltransferase M (357 aa).

Residues S183, 216–219 (APGG), D235, D255, and D271 each bind S-adenosyl-L-methionine. Residue K300 is the Proton acceptor of the active site.

This sequence belongs to the class I-like SAM-binding methyltransferase superfamily. RNA methyltransferase RlmE family. RlmM subfamily. Monomer.

Its subcellular location is the cytoplasm. The enzyme catalyses cytidine(2498) in 23S rRNA + S-adenosyl-L-methionine = 2'-O-methylcytidine(2498) in 23S rRNA + S-adenosyl-L-homocysteine + H(+). Functionally, catalyzes the 2'-O-methylation at nucleotide C2498 in 23S rRNA. The protein is Ribosomal RNA large subunit methyltransferase M of Pseudomonas syringae pv. tomato (strain ATCC BAA-871 / DC3000).